The sequence spans 443 residues: MITRFAPSPTGYLHVGNVRTALICWLYVRKQKGKFLLRFDDTDTQRSQEEYIKEIENDLKWLNMNWDASFRQSSRFDRYEDVFQYLLKEGFLYPCYESKEELEFKRKMKLKSGLPPIYDRSALNLTQAEKDKYFGRAPYFRFKINQDQLINWDDEIRGKVSFNPKNISDPIIRRVDGTYTYMLPSVIDDMDFNVTHVIRGEDHISNTAVQIQMLDALKAKVPMFAHLSLLYSDDNKISKRVGGSSVKDMQLYELEPMAINSYFAKIGTSHPIDVHINMLGLINSFDITAFSQAPTKFNIDDILKLNPKILHNMSFDDVKDRLKELKIDKPAFWDFVCGNIEKFSDIEEWIKICSRDMVPVVKQDDKDFITLALNMFPQGEVHDSTWNTWVSNIKQQTDRRGKNLFAPLRLALTGLAAGPELAKLLPLIGREEIVRRLSYSVTQ.

Residues 7–17 (PSPTGYLHVGN) carry the 'HIGH' region motif. The 'KMSKS' region motif lies at 236–240 (KISKR). Lys-239 contacts ATP.

The protein belongs to the class-I aminoacyl-tRNA synthetase family. Glutamate--tRNA ligase type 1 subfamily. Monomer.

It localises to the cytoplasm. It carries out the reaction tRNA(Glu) + L-glutamate + ATP = L-glutamyl-tRNA(Glu) + AMP + diphosphate. Catalyzes the attachment of glutamate to tRNA(Glu) in a two-step reaction: glutamate is first activated by ATP to form Glu-AMP and then transferred to the acceptor end of tRNA(Glu). The sequence is that of Glutamate--tRNA ligase 2 from Ehrlichia canis (strain Jake).